The chain runs to 402 residues: MALKRSNFFVDKDQQLKDNLILDITDLHVNFKVKDGILHAVRGIDLKVERGSIVGIVGESGSGKSVSVKSIIGFNDNAQTKAKLMNFKNVDITKLKKHQWKYYRGTYVSYISQDPLFSLNPTMTIGKQVKEAIYVASKRRYFQAKSDLKFALSNKEIDKKTYKSKLKEIKQTYQQKIKPINVEKKTLEILQFIGINDAKKRLKAFPSEFSGGMRQRIVIAIAVATEPDLIIADEPTTALDVTIQAKVLTLIKQLRDLLNITIIFISHNISLIANFCDFVYVMYAGKIVEQGLVEEIFTNPLHPYTWALISSIPEQKDKNKPLTSIPGVIPNMLTPPKGDAFASRNQYALAIDFEYHPPFFEVTKTHKAATWLLHPQAPKVEPPQAVIDNITLTKKALQFKDQ.

Residues Leu22–Ile309 enclose the ABC transporter domain. Gly58–Ser65 serves as a coordination point for ATP.

This sequence belongs to the ABC transporter superfamily. In terms of assembly, the complex is composed of two ATP-binding proteins (OppD and OppF), two transmembrane proteins (OppB and OppC) and a solute-binding protein (OppA).

It localises to the cell membrane. It catalyses the reaction a [peptide](out) + ATP + H2O = a [peptide](in) + ADP + phosphate + H(+). Its function is as follows. Part of the ABC transporter complex OppABCDF involved in the uptake of oligopeptides. Probably responsible for energy coupling to the transport system. This Mycoplasma genitalium (strain ATCC 33530 / DSM 19775 / NCTC 10195 / G37) (Mycoplasmoides genitalium) protein is Oligopeptide transport ATP-binding protein OppD (oppD).